The sequence spans 360 residues: uncharacterized protein (360 aa).

A run of 6 helical transmembrane segments spans residues 12-32 (ILPL…ITQI), 52-72 (VVLV…VIAV), 96-116 (IQLA…AYYI), 278-298 (IIWP…FLRY), 306-326 (FMPV…HFIL), and 336-356 (FIFA…YLLV).

It localises to the cell membrane. This is an uncharacterized protein from Rickettsia prowazekii (strain Madrid E).